Reading from the N-terminus, the 340-residue chain is tRNA N6-adenosine threonylcarbamoyltransferase (340 aa).

2 residues coordinate Fe cation: histidine 111 and histidine 115. Residues 134–138 (IISGA), aspartate 167, glycine 180, and asparagine 273 each bind substrate. Residue aspartate 301 participates in Fe cation binding.

It belongs to the KAE1 / TsaD family. Fe(2+) is required as a cofactor.

Its subcellular location is the cytoplasm. The enzyme catalyses L-threonylcarbamoyladenylate + adenosine(37) in tRNA = N(6)-L-threonylcarbamoyladenosine(37) in tRNA + AMP + H(+). In terms of biological role, required for the formation of a threonylcarbamoyl group on adenosine at position 37 (t(6)A37) in tRNAs that read codons beginning with adenine. Is involved in the transfer of the threonylcarbamoyl moiety of threonylcarbamoyl-AMP (TC-AMP) to the N6 group of A37, together with TsaE and TsaB. TsaD likely plays a direct catalytic role in this reaction. The protein is tRNA N6-adenosine threonylcarbamoyltransferase of Wigglesworthia glossinidia brevipalpis.